Here is a 700-residue protein sequence, read N- to C-terminus: Elongation factor G (700 aa).

A tr-type G domain is found at 8-290 (DKYRNIGISA…AVVELLPSPL (283 aa)). Residues 17-24 (AHIDAGKT), 88-92 (DTPGH), and 142-145 (NKMD) each bind GTP.

It belongs to the TRAFAC class translation factor GTPase superfamily. Classic translation factor GTPase family. EF-G/EF-2 subfamily.

The protein localises to the cytoplasm. In terms of biological role, catalyzes the GTP-dependent ribosomal translocation step during translation elongation. During this step, the ribosome changes from the pre-translocational (PRE) to the post-translocational (POST) state as the newly formed A-site-bound peptidyl-tRNA and P-site-bound deacylated tRNA move to the P and E sites, respectively. Catalyzes the coordinated movement of the two tRNA molecules, the mRNA and conformational changes in the ribosome. The protein is Elongation factor G of Polynucleobacter necessarius subsp. necessarius (strain STIR1).